The following is a 199-amino-acid chain: MQYPEPIARLIDSYMKLPGIGEKSATRLAFYTLGMSDADVDNFAKSLRAVKRDLHYCSVCGNITEDDPCPICKDKTRDQSRVLVVERSRDIMAMERMKEYHGLYHVLHGTISPSEGTGPQDINLESLLKRLEAHKEIQEVIVATNASLDGETTAQYLAHLIKPAGIKVTRLAHGLSAGADIDYTDEVTLFRAVQGRTEM.

The C4-type zinc finger occupies 57 to 72 (CSVCGNITEDDPCPIC). A Toprim domain is found at 80–176 (SRVLVVERSR…KVTRLAHGLS (97 aa)).

It belongs to the RecR family.

In terms of biological role, may play a role in DNA repair. It seems to be involved in an RecBC-independent recombinational process of DNA repair. It may act with RecF and RecO. The sequence is that of Recombination protein RecR from Limosilactobacillus fermentum (strain NBRC 3956 / LMG 18251) (Lactobacillus fermentum).